The primary structure comprises 459 residues: Chromosomal replication initiator protein DnaA (459 aa).

Residues 1–74 are domain I, interacts with DnaA modulators; sequence MMEMPIDNLW…ANVVQSILGH (74 aa). Positions 74-117 are domain II; it reads HPVEIYITVAKGEEFEEIGGGGEWELPTTNIINETPNQNRQPNT. Residues 118–334 are domain III, AAA+ region; it reads ELNAKYVFSR…GALTRALAYI (217 aa). Residues Gly-162, Gly-164, Lys-165, and Thr-166 each contribute to the ATP site. The domain IV, binds dsDNA stretch occupies residues 335–459; that stretch reads SIWGLPMTVA…IKMNSRSRKP (125 aa).

It belongs to the DnaA family. In terms of assembly, oligomerizes as a right-handed, spiral filament on DNA at oriC.

The protein resides in the cytoplasm. Functionally, plays an essential role in the initiation and regulation of chromosomal replication. ATP-DnaA binds to the origin of replication (oriC) to initiate formation of the DNA replication initiation complex once per cell cycle. Binds the DnaA box (a 9 base pair repeat at the origin) and separates the double-stranded (ds)DNA. Forms a right-handed helical filament on oriC DNA; dsDNA binds to the exterior of the filament while single-stranded (ss)DNA is stabiized in the filament's interior. The ATP-DnaA-oriC complex binds and stabilizes one strand of the AT-rich DNA unwinding element (DUE), permitting loading of DNA polymerase. After initiation quickly degrades to an ADP-DnaA complex that is not apt for DNA replication. Binds acidic phospholipids. The protein is Chromosomal replication initiator protein DnaA of Nostoc sp. (strain PCC 7120 / SAG 25.82 / UTEX 2576).